The primary structure comprises 428 residues: Bifunctional protein GlmU (428 aa).

The pyrophosphorylase stretch occupies residues 1-221 (MDIVILAAGC…ERKAMGINTR (221 aa)). Residues 6–9 (LAAG), lysine 20, glutamine 74, 79–80 (GT), 103–105 (YGD), glycine 140, and asparagine 219 contribute to the UDP-N-acetyl-alpha-D-glucosamine site. Aspartate 105 serves as a coordination point for Mg(2+). A Mg(2+)-binding site is contributed by asparagine 219. The segment at 222–242 (ADLAIAESYFQCMKRASFLQS) is linker. The segment at 243-428 (GVTLTSPDQV…TTKPEYKTRR (186 aa)) is N-acetyltransferase. Arginine 308 and lysine 326 together coordinate UDP-N-acetyl-alpha-D-glucosamine. The active-site Proton acceptor is the histidine 338. The UDP-N-acetyl-alpha-D-glucosamine site is built by tyrosine 341 and asparagine 352. Residues alanine 355, 361–362 (NY), alanine 398, and arginine 415 each bind acetyl-CoA.

It in the N-terminal section; belongs to the N-acetylglucosamine-1-phosphate uridyltransferase family. The protein in the C-terminal section; belongs to the transferase hexapeptide repeat family. Homotrimer. Requires Mg(2+) as cofactor.

It is found in the cytoplasm. The catalysed reaction is alpha-D-glucosamine 1-phosphate + acetyl-CoA = N-acetyl-alpha-D-glucosamine 1-phosphate + CoA + H(+). The enzyme catalyses N-acetyl-alpha-D-glucosamine 1-phosphate + UTP + H(+) = UDP-N-acetyl-alpha-D-glucosamine + diphosphate. The protein operates within nucleotide-sugar biosynthesis; UDP-N-acetyl-alpha-D-glucosamine biosynthesis; N-acetyl-alpha-D-glucosamine 1-phosphate from alpha-D-glucosamine 6-phosphate (route II): step 2/2. Its pathway is nucleotide-sugar biosynthesis; UDP-N-acetyl-alpha-D-glucosamine biosynthesis; UDP-N-acetyl-alpha-D-glucosamine from N-acetyl-alpha-D-glucosamine 1-phosphate: step 1/1. It participates in bacterial outer membrane biogenesis; LPS lipid A biosynthesis. Functionally, catalyzes the last two sequential reactions in the de novo biosynthetic pathway for UDP-N-acetylglucosamine (UDP-GlcNAc). The C-terminal domain catalyzes the transfer of acetyl group from acetyl coenzyme A to glucosamine-1-phosphate (GlcN-1-P) to produce N-acetylglucosamine-1-phosphate (GlcNAc-1-P), which is converted into UDP-GlcNAc by the transfer of uridine 5-monophosphate (from uridine 5-triphosphate), a reaction catalyzed by the N-terminal domain. This chain is Bifunctional protein GlmU, found in Anaplasma marginale (strain Florida).